The chain runs to 404 residues: tRNA pseudouridine(31) synthase (404 aa).

Asp-168 is a catalytic residue.

Belongs to the pseudouridine synthase RluA family.

It is found in the cytoplasm. The protein resides in the mitochondrion. The catalysed reaction is uridine(31) in tRNA = pseudouridine(31) in tRNA. Catalyzes the formation of pseudouridine at position 31 in the psi GC loop of tRNAS. The sequence is that of tRNA pseudouridine(31) synthase (PUS6) from Saccharomyces cerevisiae (strain ATCC 204508 / S288c) (Baker's yeast).